The following is a 364-amino-acid chain: D-alanine--D-alanine ligase (364 aa).

The ATP-grasp domain occupies 146-352 (KLCAMNAGIA…FAELVEKLLL (207 aa)). ATP is bound at residue 179–234 (TKRFDWPLFVKPASLGSSVGISKVRNAEELAAALENACGLDSKALVEAAISGREIE). Residues D305, E319, and N321 each contribute to the Mg(2+) site.

It belongs to the D-alanine--D-alanine ligase family. Mg(2+) is required as a cofactor. It depends on Mn(2+) as a cofactor.

It localises to the cytoplasm. It carries out the reaction 2 D-alanine + ATP = D-alanyl-D-alanine + ADP + phosphate + H(+). Its pathway is cell wall biogenesis; peptidoglycan biosynthesis. Cell wall formation. This chain is D-alanine--D-alanine ligase, found in Chlorobaculum tepidum (strain ATCC 49652 / DSM 12025 / NBRC 103806 / TLS) (Chlorobium tepidum).